The following is a 631-amino-acid chain: BTB/POZ domain-containing protein At1g67900 (631 aa).

A BTB domain is found at 28 to 93; that stretch reads SDFTIEVSGS…CYGITITISA (66 aa). Residues 200 to 509 enclose the NPH3 domain; sequence GWWAEDIAEL…VQVLFYEQAR (310 aa). The tract at residues 361-399 is disordered; that stretch reads QTSPPTSPLRGKKGMMDRRRRSRSAENIDLEFQESRRSS. Over residues 370-382 the composition is skewed to basic residues; the sequence is RGKKGMMDRRRRS. Tyrosine 450 carries the phosphotyrosine modification. Serine 567 carries the post-translational modification Phosphoserine.

The protein belongs to the NPH3 family.

It functions in the pathway protein modification; protein ubiquitination. In terms of biological role, may act as a substrate-specific adapter of an E3 ubiquitin-protein ligase complex (CUL3-RBX1-BTB) which mediates the ubiquitination and subsequent proteasomal degradation of target proteins. The protein is BTB/POZ domain-containing protein At1g67900 of Arabidopsis thaliana (Mouse-ear cress).